A 269-amino-acid chain; its full sequence is Thiazole synthase (269 aa).

The active-site Schiff-base intermediate with DXP is Lys-105. Residues Gly-166, 192–193 (AG), and 214–215 (NT) each bind 1-deoxy-D-xylulose 5-phosphate. Residues 245 to 269 (AMSAQDAAQPSTPVLGTPFWHHDHG) are disordered.

It belongs to the ThiG family. As to quaternary structure, homotetramer. Forms heterodimers with either ThiH or ThiS.

The protein localises to the cytoplasm. The enzyme catalyses [ThiS sulfur-carrier protein]-C-terminal-Gly-aminoethanethioate + 2-iminoacetate + 1-deoxy-D-xylulose 5-phosphate = [ThiS sulfur-carrier protein]-C-terminal Gly-Gly + 2-[(2R,5Z)-2-carboxy-4-methylthiazol-5(2H)-ylidene]ethyl phosphate + 2 H2O + H(+). Its pathway is cofactor biosynthesis; thiamine diphosphate biosynthesis. Its function is as follows. Catalyzes the rearrangement of 1-deoxy-D-xylulose 5-phosphate (DXP) to produce the thiazole phosphate moiety of thiamine. Sulfur is provided by the thiocarboxylate moiety of the carrier protein ThiS. In vitro, sulfur can be provided by H(2)S. The protein is Thiazole synthase of Paracidovorax citrulli (strain AAC00-1) (Acidovorax citrulli).